A 109-amino-acid chain; its full sequence is Period circadian protein (109 aa).

Polar residues-rich tracts occupy residues 42–56 (QSYS…NLSP) and 68–80 (SSRN…NLNM). Residues 42 to 109 (QSYSTPANTG…LVTLTESLLK (68 aa)) form a disordered region. A compositionally biased stretch (low complexity) spans 81–97 (GSVTNTSNTGTGTSSGS).

As to quaternary structure, forms a heterodimer with timeless (TIM); the complex then translocates into the nucleus. Post-translationally, phosphorylated with a circadian rhythmicity, probably by the double-time protein (dbt). Phosphorylation could be implicated in the stability of per monomer and in the formation of heterodimer per-tim.

It is found in the nucleus. The protein resides in the cytoplasm. It localises to the perinuclear region. Its function is as follows. Essential for biological clock functions. Determines the period length of circadian and ultradian rhythms; an increase in PER dosage leads to shortened circadian rhythms and a decrease leads to lengthened circadian rhythms. Essential for the circadian rhythmicity of locomotor activity, eclosion behavior, and for the rhythmic component of the male courtship song that originates in the thoracic nervous system. The biological cycle depends on the rhythmic formation and nuclear localization of the TIM-PER complex. Light induces the degradation of TIM, which promotes elimination of PER. Nuclear activity of the heterodimer coordinatively regulates PER and TIM transcription through a negative feedback loop. Behaves as a negative element in circadian transcriptional loop. Does not appear to bind DNA, suggesting indirect transcriptional inhibition. This Musca domestica (House fly) protein is Period circadian protein (per).